The following is a 68-amino-acid chain: DNA-directed RNA polymerase subunit omega (68 aa).

It belongs to the RNA polymerase subunit omega family. In terms of assembly, the RNAP catalytic core consists of 2 alpha, 1 beta, 1 beta' and 1 omega subunit. When a sigma factor is associated with the core the holoenzyme is formed, which can initiate transcription.

It carries out the reaction RNA(n) + a ribonucleoside 5'-triphosphate = RNA(n+1) + diphosphate. Promotes RNA polymerase assembly. Latches the N- and C-terminal regions of the beta' subunit thereby facilitating its interaction with the beta and alpha subunits. This chain is DNA-directed RNA polymerase subunit omega, found in Desulfatibacillum aliphaticivorans.